Here is a 487-residue protein sequence, read N- to C-terminus: N-succinylglutamate 5-semialdehyde dehydrogenase (487 aa).

An NAD(+)-binding site is contributed by 221 to 226 (GSSDTG). Residues E244 and C278 contribute to the active site.

The protein belongs to the aldehyde dehydrogenase family. AstD subfamily.

The enzyme catalyses N-succinyl-L-glutamate 5-semialdehyde + NAD(+) + H2O = N-succinyl-L-glutamate + NADH + 2 H(+). The protein operates within amino-acid degradation; L-arginine degradation via AST pathway; L-glutamate and succinate from L-arginine: step 4/5. Its function is as follows. Catalyzes the NAD-dependent reduction of succinylglutamate semialdehyde into succinylglutamate. The chain is N-succinylglutamate 5-semialdehyde dehydrogenase from Burkholderia lata (strain ATCC 17760 / DSM 23089 / LMG 22485 / NCIMB 9086 / R18194 / 383).